Consider the following 48-residue polypeptide: MPQMIPFFFMNQLTYGFTFILTILFLTSYVFLPMILRLYISRLYISKL.

A helical transmembrane segment spans residues 13-35 (LTYGFTFILTILFLTSYVFLPMI).

The protein belongs to the ATPase protein 8 family. F-type ATPases have 2 components, CF(1) - the catalytic core - and CF(0) - the membrane proton channel. In yeast, the dimeric form of ATP synthase consists of 18 polypeptides: alpha, beta, gamma, delta, epsilon, 4 (B), 5 (OSCP), 6 (A), 8, 9 (C), d, E (Tim11), f, g, h, i, j and k.

The protein resides in the mitochondrion membrane. Its function is as follows. Mitochondrial membrane ATP synthase (F(1)F(0) ATP synthase or Complex V) produces ATP from ADP in the presence of a proton gradient across the membrane which is generated by electron transport complexes of the respiratory chain. F-type ATPases consist of two structural domains, F(1) - containing the extramembraneous catalytic core and F(0) - containing the membrane proton channel, linked together by a central stalk and a peripheral stalk. During catalysis, ATP synthesis in the catalytic domain of F(1) is coupled via a rotary mechanism of the central stalk subunits to proton translocation. Part of the complex F(0) domain. Minor subunit located with subunit a in the membrane. The sequence is that of ATP synthase protein 8 (ATP8) from Eremothecium gossypii (strain ATCC 10895 / CBS 109.51 / FGSC 9923 / NRRL Y-1056) (Yeast).